The chain runs to 570 residues: Pyruvate decarboxylase (570 aa).

The propeptide at 1 to 2 (MV) is removed in mature form. Substrate-binding residues include Asp33 and His120. The interval 394 to 476 (DSWFNGIQLK…MLINNRGYTI (83 aa)) is thiamine pyrophosphate binding. Positions 444, 471, and 473 each coordinate Mg(2+). Residue Glu477 participates in substrate binding.

Belongs to the TPP enzyme family. As to quaternary structure, homomer. The cofactor is a metal cation. Thiamine diphosphate is required as a cofactor.

The protein resides in the cytoplasm. The enzyme catalyses a 2-oxocarboxylate + H(+) = an aldehyde + CO2. It participates in carbohydrate metabolism; pyruvate metabolism. This Neurospora crassa (strain ATCC 24698 / 74-OR23-1A / CBS 708.71 / DSM 1257 / FGSC 987) protein is Pyruvate decarboxylase (cfp).